Here is a 357-residue protein sequence, read N- to C-terminus: Probable butyrate kinase 1 (357 aa).

Belongs to the acetokinase family.

It is found in the cytoplasm. The catalysed reaction is butanoate + ATP = butanoyl phosphate + ADP. This is Probable butyrate kinase 1 from Thermotoga maritima (strain ATCC 43589 / DSM 3109 / JCM 10099 / NBRC 100826 / MSB8).